The sequence spans 42 residues: F420-non-reducing hydrogenase vhu subunit U (42 aa).

Positions 21 and 24 each coordinate Ni(2+). Residue Sec21 is a non-standard amino acid, selenocysteine. The propeptide at 28–42 is removed in mature form; it reads VLDRVKFRIERKDED.

It belongs to the [NiFe]/[NiFeSe] hydrogenase large subunit family. In terms of assembly, the F420-non-reducing hydrogenase vhu is composed of four subunits; VhuA, VhuD, VhuG and VhuU. It depends on Ni(2+) as a cofactor.

The sequence is that of F420-non-reducing hydrogenase vhu subunit U (vhuU) from Methanopyrus kandleri (strain AV19 / DSM 6324 / JCM 9639 / NBRC 100938).